The primary structure comprises 553 residues: Dihydroxy-acid dehydratase (553 aa).

Position 78 (Asp-78) interacts with Mg(2+). Position 119 (Cys-119) interacts with [2Fe-2S] cluster. Asp-120 and Lys-121 together coordinate Mg(2+). Lys-121 carries the post-translational modification N6-carboxylysine. Cys-193 contributes to the [2Fe-2S] cluster binding site. Residue Glu-441 participates in Mg(2+) binding. Catalysis depends on Ser-467, which acts as the Proton acceptor.

Belongs to the IlvD/Edd family. As to quaternary structure, homodimer. It depends on [2Fe-2S] cluster as a cofactor. Mg(2+) is required as a cofactor.

The catalysed reaction is (2R)-2,3-dihydroxy-3-methylbutanoate = 3-methyl-2-oxobutanoate + H2O. The enzyme catalyses (2R,3R)-2,3-dihydroxy-3-methylpentanoate = (S)-3-methyl-2-oxopentanoate + H2O. The protein operates within amino-acid biosynthesis; L-isoleucine biosynthesis; L-isoleucine from 2-oxobutanoate: step 3/4. Its pathway is amino-acid biosynthesis; L-valine biosynthesis; L-valine from pyruvate: step 3/4. In terms of biological role, functions in the biosynthesis of branched-chain amino acids. Catalyzes the dehydration of (2R,3R)-2,3-dihydroxy-3-methylpentanoate (2,3-dihydroxy-3-methylvalerate) into 2-oxo-3-methylpentanoate (2-oxo-3-methylvalerate) and of (2R)-2,3-dihydroxy-3-methylbutanoate (2,3-dihydroxyisovalerate) into 2-oxo-3-methylbutanoate (2-oxoisovalerate), the penultimate precursor to L-isoleucine and L-valine, respectively. The chain is Dihydroxy-acid dehydratase from Citrifermentans bemidjiense (strain ATCC BAA-1014 / DSM 16622 / JCM 12645 / Bem) (Geobacter bemidjiensis).